A 167-amino-acid polypeptide reads, in one-letter code: 18.8 kDa class II heat shock protein (167 aa).

The region spanning 49-167 is the sHSP domain; the sequence is DAKAMAATPA…KPKTVEVKVA (119 aa).

This sequence belongs to the small heat shock protein (HSP20) family.

The protein resides in the cytoplasm. This Ipomoea nil (Japanese morning glory) protein is 18.8 kDa class II heat shock protein (SHSP-2).